Consider the following 380-residue polypeptide: Heme A synthase (380 aa).

8 helical membrane-spanning segments follow: residues 36–56 (IRAWLAVLFALVVAMIVVGGL), 125–145 (VIGLVWALGFFGFLLARKIPA), 151–171 (LILPGVLGGVQGAVGAWMVAS), 187–207 (LATHLGLAFVILGLLAWSILQ), 227–247 (FGLATGWLHLAFLQILIGALV), 287–307 (LVQFIHRIVGYLLLAYGVMVW), 320–340 (FAFNAGFAALSLQVVLGIVTV), and 344–364 (APWQIAILHQLLAVGVFVLIL). His-292 serves as a coordination point for heme. His-352 serves as a coordination point for heme.

It belongs to the COX15/CtaA family. Type 2 subfamily. As to quaternary structure, interacts with CtaB. Heme b is required as a cofactor.

The protein resides in the cell membrane. It carries out the reaction Fe(II)-heme o + 2 A + H2O = Fe(II)-heme a + 2 AH2. It functions in the pathway porphyrin-containing compound metabolism; heme A biosynthesis; heme A from heme O: step 1/1. In terms of biological role, catalyzes the conversion of heme O to heme A by two successive hydroxylations of the methyl group at C8. The first hydroxylation forms heme I, the second hydroxylation results in an unstable dihydroxymethyl group, which spontaneously dehydrates, resulting in the formyl group of heme A. This Ruegeria pomeroyi (strain ATCC 700808 / DSM 15171 / DSS-3) (Silicibacter pomeroyi) protein is Heme A synthase.